Consider the following 355-residue polypeptide: Holliday junction branch migration complex subunit RuvB (355 aa).

Residues 4–190 (TDKLAAERII…FGIVARLEFY (187 aa)) form a large ATPase domain (RuvB-L) region. Residues Leu-29, Arg-30, Gly-71, Lys-74, Thr-75, Thr-76, 137-139 (EDY), Arg-180, Tyr-190, and Arg-227 contribute to the ATP site. Mg(2+) is bound at residue Thr-75. The interval 191-261 (DADQLARIVR…VADAALAMLD (71 aa)) is small ATPAse domain (RuvB-S). The tract at residues 264-355 (PVGFDLMDRK…RGMWDTPAGK (92 aa)) is head domain (RuvB-H). DNA contacts are provided by Arg-300, Arg-319, and Arg-324.

It belongs to the RuvB family. Homohexamer. Forms an RuvA(8)-RuvB(12)-Holliday junction (HJ) complex. HJ DNA is sandwiched between 2 RuvA tetramers; dsDNA enters through RuvA and exits via RuvB. An RuvB hexamer assembles on each DNA strand where it exits the tetramer. Each RuvB hexamer is contacted by two RuvA subunits (via domain III) on 2 adjacent RuvB subunits; this complex drives branch migration. In the full resolvosome a probable DNA-RuvA(4)-RuvB(12)-RuvC(2) complex forms which resolves the HJ.

The protein resides in the cytoplasm. The enzyme catalyses ATP + H2O = ADP + phosphate + H(+). The RuvA-RuvB-RuvC complex processes Holliday junction (HJ) DNA during genetic recombination and DNA repair, while the RuvA-RuvB complex plays an important role in the rescue of blocked DNA replication forks via replication fork reversal (RFR). RuvA specifically binds to HJ cruciform DNA, conferring on it an open structure. The RuvB hexamer acts as an ATP-dependent pump, pulling dsDNA into and through the RuvAB complex. RuvB forms 2 homohexamers on either side of HJ DNA bound by 1 or 2 RuvA tetramers; 4 subunits per hexamer contact DNA at a time. Coordinated motions by a converter formed by DNA-disengaged RuvB subunits stimulates ATP hydrolysis and nucleotide exchange. Immobilization of the converter enables RuvB to convert the ATP-contained energy into a lever motion, pulling 2 nucleotides of DNA out of the RuvA tetramer per ATP hydrolyzed, thus driving DNA branch migration. The RuvB motors rotate together with the DNA substrate, which together with the progressing nucleotide cycle form the mechanistic basis for DNA recombination by continuous HJ branch migration. Branch migration allows RuvC to scan DNA until it finds its consensus sequence, where it cleaves and resolves cruciform DNA. In Burkholderia ambifaria (strain ATCC BAA-244 / DSM 16087 / CCUG 44356 / LMG 19182 / AMMD) (Burkholderia cepacia (strain AMMD)), this protein is Holliday junction branch migration complex subunit RuvB.